The sequence spans 420 residues: MTICQFFLQGRCRFGDRCWNEHPGARGAGGARQPPPQQQPPSGNNRRGWNASSQRYSNVIQPSSFPKSTPWGGSRDQDKPPFGSFDSGASTSRGFGSSQNPFASPLSDEQKDEKKLLEGIVKDVEVWESSGQWMFSVYSPVRKKPNISGFTDISPEELRLEYHNFLTSNNLQSYLNSVQQLVSQWRNRINELKNLTMSTKGALLSDVKDGVSQAVPAFGFGSKQAGSFGSPGFPVNNSSSSTVQNFSFKTSPGLATPPSGSTSVFGSHPAFGAGPSAGSSISSSTPAFGLGKPEATSAASFSFKSPEASSFASPGFSGFPASMAASPSGSTTAPPLRSGSSVVGFGSPSPHSQAVFAKPSTDVFGGSGISTSVLASGAADNALFTPRDQLMKEELEQFQSQRFTLGKIPLKPPPVELLTV.

A C3H1-type zinc finger spans residues 1–25; the sequence is MTICQFFLQGRCRFGDRCWNEHPGA. The stretch at 14–15 is one FG 1 repeat; sequence FG. Residues 25–111 are disordered; sequence ARGAGGARQP…FASPLSDEQK (87 aa). A compositionally biased stretch (polar residues) spans 42–67; the sequence is SGNNRRGWNASSQRYSNVIQPSSFPK. FG repeat units follow at residues 82 to 83, 95 to 96, 218 to 219, 220 to 221, 228 to 229, 265 to 266, 271 to 272, 288 to 289, 345 to 346, and 364 to 365; these read FG. A compositionally biased stretch (polar residues) spans 87-102; the sequence is SGASTSRGFGSSQNPF. Residues 323–345 are disordered; it reads MAASPSGSTTAPPLRSGSSVVGF. The interval 365 to 420 is interaction with GLE1; it reads GGSGISTSVLASGAADNALFTPRDQLMKEELEQFQSQRFTLGKIPLKPPPVELLTV.

In terms of assembly, probable component of the nuclear pore complex (NPC). Interacts with nuclear export protein NXF1. Interacts with GLE1. Able to form a heterotrimer with NUP155 and GLE1 in vitro. Interacts with XPO1. O-glycosylated.

It is found in the nucleus. Its subcellular location is the nuclear pore complex. It localises to the nucleus membrane. Its function is as follows. Required for the export of mRNAs containing poly(A) tails from the nucleus into the cytoplasm. The sequence is that of Nucleoporin NUP42 (Nup42) from Mus musculus (Mouse).